The following is a 722-amino-acid chain: Polyribonucleotide nucleotidyltransferase (722 aa).

Mg(2+)-binding residues include D495 and D501. In terms of domain architecture, KH spans P561–I620. Residues G630–K700 form the S1 motif domain.

It belongs to the polyribonucleotide nucleotidyltransferase family. Mg(2+) is required as a cofactor.

It localises to the cytoplasm. The catalysed reaction is RNA(n+1) + phosphate = RNA(n) + a ribonucleoside 5'-diphosphate. In terms of biological role, involved in mRNA degradation. Catalyzes the phosphorolysis of single-stranded polyribonucleotides processively in the 3'- to 5'-direction. The sequence is that of Polyribonucleotide nucleotidyltransferase from Chromobacterium violaceum (strain ATCC 12472 / DSM 30191 / JCM 1249 / CCUG 213 / NBRC 12614 / NCIMB 9131 / NCTC 9757 / MK).